A 98-amino-acid polypeptide reads, in one-letter code: NADH-ubiquinone oxidoreductase chain 4L (98 aa).

Transmembrane regions (helical) follow at residues 1–21, 29–49, and 59–79; these read MSLVHMNILLAFTMSLTGLLM, ALLCLEGMMLSLFILMTITIL, and TPIILLVFAACEAAVGLALLV.

The protein belongs to the complex I subunit 4L family. In terms of assembly, core subunit of respiratory chain NADH dehydrogenase (Complex I) which is composed of 45 different subunits.

The protein resides in the mitochondrion inner membrane. The enzyme catalyses a ubiquinone + NADH + 5 H(+)(in) = a ubiquinol + NAD(+) + 4 H(+)(out). Functionally, core subunit of the mitochondrial membrane respiratory chain NADH dehydrogenase (Complex I) which catalyzes electron transfer from NADH through the respiratory chain, using ubiquinone as an electron acceptor. Part of the enzyme membrane arm which is embedded in the lipid bilayer and involved in proton translocation. This is NADH-ubiquinone oxidoreductase chain 4L (MT-ND4L) from Lipotes vexillifer (Yangtze river dolphin).